The sequence spans 20 residues: Elastase (20 aa).

The Peptidase S1 domain occupies 1–20 (VVGGEVARAHSWPWQISLQY).

This sequence belongs to the peptidase S1 family. Elastase subfamily.

In terms of biological role, digests most rapidly at the C-terminal side of alanine residues, but also cleaves at valine and leucine residues. The protein is Elastase of Gadus morhua (Atlantic cod).